A 141-amino-acid chain; its full sequence is Large-conductance mechanosensitive channel (141 aa).

A run of 2 helical transmembrane segments spans residues 16 to 36 and 83 to 103; these read VIDL…VDSL and GAFI…FVAI.

Belongs to the MscL family. Homopentamer.

The protein resides in the cell inner membrane. Channel that opens in response to stretch forces in the membrane lipid bilayer. May participate in the regulation of osmotic pressure changes within the cell. This is Large-conductance mechanosensitive channel from Azoarcus sp. (strain BH72).